A 599-amino-acid polypeptide reads, in one-letter code: uncharacterized protein (599 aa).

Residues 1-13 (MSSSSSHNSFSGS) are compositionally biased toward low complexity. 2 disordered regions span residues 1–27 (MSSS…IDGL) and 41–86 (YPSN…DDTN). Over residues 14–27 (KTNAAEGQNSIDGL) the composition is skewed to polar residues. Positions 44–70 (NEEKEVKETDIVPDENKVNELDVHKQS) are enriched in basic and acidic residues. The next 14 helical transmembrane spans lie at 97-117 (IVVP…TIVT), 135-155 (WIGS…GVFC), 162-182 (IVLY…GASQ), 192-212 (AIQG…ISDI), 223-243 (GILA…GGAI), 251-271 (WIFF…VVFL), 290-310 (FIGL…ISLG), 321-341 (ILCY…YDTF), 359-379 (AALL…AYYV), 396-416 (VHTI…GMVL), 423-443 (LPLI…MICV), 452-472 (VMGL…PPLI), 489-509 (TLMF…EVIF), and 552-572 (VIWI…FFIK).

Belongs to the major facilitator superfamily. TCR/Tet family.

Its subcellular location is the membrane. This is an uncharacterized protein from Schizosaccharomyces pombe (strain 972 / ATCC 24843) (Fission yeast).